The following is a 471-amino-acid chain: Nuclear distribution protein PAC1 (471 aa).

Residues 9–41 form the LisH domain; that stretch reads QAEELHKSMIAYLLSVNLSKSAAALREELADSV. Residues 60-87 adopt a coiled-coil conformation; sequence TSVVRLQKKIMDLESRNAALQQELDSAT. Positions 83-93 are enriched in polar residues; sequence LDSATPTSLSR. A disordered region spans residues 83–108; that stretch reads LDSATPTSLSRRNQDPASWLPRAPAR. WD repeat units follow at residues 113–154, 156–196, 200–247, 250–289, 292–352, 354–393, 398–428, and 429–467; these read SHRG…RTIK, HTRA…KNIR, GHDH…CVKT, GHLD…TKST, GHEH…IKTL, GHDN…KCVR, AHGH…INGQ, and GTPS…MNVR. Positions 424–449 are disordered; the sequence is GINGQGTPSMNGVSISTTSKKEDTGG. Positions 428-441 are enriched in polar residues; that stretch reads QGTPSMNGVSISTT.

It belongs to the WD repeat LIS1/nudF family. Self-associates. Interacts with NDL1 and dynein.

It localises to the cytoplasm. Its subcellular location is the cytoskeleton. It is found in the spindle pole. In terms of biological role, positively regulates the activity of the minus-end directed microtubule motor protein dynein. May enhance dynein-mediated microtubule sliding by targeting dynein to the microtubule plus end. Required for nuclear migration during vegetative growth as well as development. Required for retrograde early endosome (EE) transport from the hyphal tip. Required for localization of dynein to the mitotic spindle poles. Recruits additional proteins to the dynein complex at SPBs. This Coccidioides posadasii (strain C735) (Valley fever fungus) protein is Nuclear distribution protein PAC1.